A 196-amino-acid polypeptide reads, in one-letter code: ATP-dependent Clp protease proteolytic subunit (196 aa).

Ser-101 serves as the catalytic Nucleophile. His-126 is an active-site residue.

This sequence belongs to the peptidase S14 family. In terms of assembly, component of the chloroplastic Clp protease core complex.

The protein localises to the plastid. The protein resides in the chloroplast stroma. It carries out the reaction Hydrolysis of proteins to small peptides in the presence of ATP and magnesium. alpha-casein is the usual test substrate. In the absence of ATP, only oligopeptides shorter than five residues are hydrolyzed (such as succinyl-Leu-Tyr-|-NHMec, and Leu-Tyr-Leu-|-Tyr-Trp, in which cleavage of the -Tyr-|-Leu- and -Tyr-|-Trp bonds also occurs).. Its function is as follows. Cleaves peptides in various proteins in a process that requires ATP hydrolysis. Has a chymotrypsin-like activity. Plays a major role in the degradation of misfolded proteins. This is ATP-dependent Clp protease proteolytic subunit from Gossypium hirsutum (Upland cotton).